The primary structure comprises 394 residues: Actin-related protein 2 (394 aa).

ATP-binding positions include 160–162 (GDG), 214–218 (RMIKE), and 305–310 (GGSTMY).

Belongs to the actin family. ARP2 subfamily. In terms of assembly, component of the Arp2/3 complex composed of ACTR2/ARP2, ACTR3/ARP3, ARPC1B/p41-ARC, ARPC2/p34-ARC, ARPC3/p21-ARC, ARPC4/p20-ARC and ARPC5/p16-ARC.

The protein resides in the cytoplasm. It localises to the cytoskeleton. Its subcellular location is the cell projection. The protein localises to the nucleus. ATP-binding component of the Arp2/3 complex, a multiprotein complex that mediates actin polymerization upon stimulation by nucleation-promoting factor (NPF). The Arp2/3 complex mediates the formation of branched actin networks in the cytoplasm, providing the force for cell motility. Seems to contact the pointed end of the daughter actin filament. In addition to its role in the cytoplasmic cytoskeleton, the Arp2/3 complex also promotes actin polymerization in the nucleus, thereby regulating gene transcription and repair of damaged DNA. The Arp2/3 complex promotes homologous recombination (HR) repair in response to DNA damage by promoting nuclear actin polymerization, leading to drive motility of double-strand breaks (DSBs). The chain is Actin-related protein 2 (ACTR2) from Gallus gallus (Chicken).